Here is a 1060-residue protein sequence, read N- to C-terminus: Probable serine/threonine-protein kinase MARK-A (1060 aa).

Composition is skewed to basic and acidic residues over residues 1–11 (METLKEEEQFR) and 23–37 (HLKE…EREQ). 2 disordered regions span residues 1-52 (METL…LQLQ) and 67-88 (NKIP…SISV). Composition is skewed to low complexity over residues 38–52 (QQQQ…LQLQ) and 68–88 (KIPS…SISV). Residues 109–361 (YLVIKTIGRG…MEEIINHPWL (253 aa)) enclose the Protein kinase domain. ATP-binding positions include 115–123 (IGRGQFGKV) and Lys139. The active-site Proton acceptor is Asp232. Residues 409 to 475 (INNINNTMAT…TTTTNATTTT (67 aa)) show a composition bias toward low complexity. Disordered stretches follow at residues 409–488 (INNI…NNEE), 560–701 (GENS…SPLC), 714–886 (LREK…PVHS), and 899–966 (DDKS…QEPR). One can recognise a UBA domain in the interval 488 to 528 (ELDQEIIEELVGLGFEREELCNSIRQNKYNDAASTYFLLQG). The span at 577-594 (TVDSPKSTNTPQYRSSNT) shows a compositional bias: polar residues. Composition is skewed to low complexity over residues 603–613 (QQQQQQQQQQQ), 620–637 (QQQN…NNHN), 650–699 (STTV…NPSP), and 720–760 (TTTN…TSPN). Positions 761–770 (LQPFSLASTA) are enriched in polar residues. Composition is skewed to low complexity over residues 771–799 (NNNN…SLNS) and 811–831 (QQQQ…NSSS). Residues 837-846 (QRQESRKLED) show a composition bias toward basic and acidic residues. Composition is skewed to low complexity over residues 904 to 926 (NSSS…TNNT) and 935 to 965 (QNSN…QQEP). A KA1 domain is found at 1008 to 1057 (IECETEGVRFSIEICRLPRLSVNGLKFKRIGGSSWRYKSICKDLLSQMKL).

Belongs to the protein kinase superfamily. CAMK Ser/Thr protein kinase family. SNF1 subfamily.

It carries out the reaction L-seryl-[protein] + ATP = O-phospho-L-seryl-[protein] + ADP + H(+). The enzyme catalyses L-threonyl-[protein] + ATP = O-phospho-L-threonyl-[protein] + ADP + H(+). In Dictyostelium discoideum (Social amoeba), this protein is Probable serine/threonine-protein kinase MARK-A (mrkA).